A 185-amino-acid chain; its full sequence is Ribosome-recycling factor (185 aa).

Belongs to the RRF family.

The protein localises to the cytoplasm. In terms of biological role, responsible for the release of ribosomes from messenger RNA at the termination of protein biosynthesis. May increase the efficiency of translation by recycling ribosomes from one round of translation to another. This chain is Ribosome-recycling factor, found in Streptococcus pyogenes serotype M18 (strain MGAS8232).